The following is a 128-amino-acid chain: Diacylglycerol kinase (128 aa).

E34 is an a divalent metal cation binding site. 2 consecutive transmembrane segments (helical) span residues S35 to A55 and F58 to N78. The active-site Proton acceptor is E75. Residue E82 participates in a divalent metal cation binding. Residues Q107–L127 form a helical membrane-spanning segment.

The protein belongs to the bacterial diacylglycerol kinase family. Requires Mg(2+) as cofactor.

It is found in the cell inner membrane. The catalysed reaction is a 1,2-diacyl-sn-glycerol + ATP = a 1,2-diacyl-sn-glycero-3-phosphate + ADP + H(+). Functionally, catalyzes the ATP-dependent phosphorylation of sn-l,2-diacylglycerol (DAG) to phosphatidic acid. Involved in the recycling of diacylglycerol produced as a by-product during membrane-derived oligosaccharide (MDO) biosynthesis. This Helicobacter pylori (strain ATCC 700392 / 26695) (Campylobacter pylori) protein is Diacylglycerol kinase (dgkA).